Reading from the N-terminus, the 454-residue chain is Chromosomal replication initiator protein DnaA (454 aa).

Residues 1–81 are domain I, interacts with DnaA modulators; that stretch reads MNNSLWQQCA…PNVVLKVGEA (81 aa). Positions 79–110 are disordered; the sequence is GEASPTQRDSGSPQRAAATRRKTPNFSSGNTD. Residues 81-117 form a domain II region; it reads ASPTQRDSGSPQRAAATRRKTPNFSSGNTDVEVPFES. Over residues 82 to 91 the composition is skewed to polar residues; the sequence is SPTQRDSGSP. The segment at 118–334 is domain III, AAA+ region; it reads NIHPEYTFDN…GALNRVVANV (217 aa). 4 residues coordinate ATP: G162, G164, K165, and T166. Residues 335 to 454 form a domain IV, binds dsDNA region; it reads QLTGRPITID…YRNLIRTLSS (120 aa).

Belongs to the DnaA family. As to quaternary structure, oligomerizes as a right-handed, spiral filament on DNA at oriC.

Its subcellular location is the cytoplasm. Its function is as follows. Plays an essential role in the initiation and regulation of chromosomal replication. ATP-DnaA binds to the origin of replication (oriC) to initiate formation of the DNA replication initiation complex once per cell cycle. Binds the DnaA box (a 9 base pair repeat at the origin) and separates the double-stranded (ds)DNA. Forms a right-handed helical filament on oriC DNA; dsDNA binds to the exterior of the filament while single-stranded (ss)DNA is stabiized in the filament's interior. The ATP-DnaA-oriC complex binds and stabilizes one strand of the AT-rich DNA unwinding element (DUE), permitting loading of DNA polymerase. After initiation quickly degrades to an ADP-DnaA complex that is not apt for DNA replication. Binds acidic phospholipids. The chain is Chromosomal replication initiator protein DnaA from Idiomarina loihiensis (strain ATCC BAA-735 / DSM 15497 / L2-TR).